Consider the following 714-residue polypeptide: MFEIHREELDWAGRKLTLETGRIARQADGAVLATYGETTVLATVVSARTPKPGIDFFPLTVNYQEKAFAAGRIPGGYFKREGRPSEKETLVSRLIDRPIRPLFPEGYRNDTQVVVTVLSHDLENDPDILALVATSAALTISGIPFMGPVGGARVGYINGALKLNPTVDELKESALDLVVAGTGDAVLMVESEAKELSETLMLEAVMTGHRGFQPVIDAIIRLAEKAAKEPRELAVADKAEVEAAVRDIAEGELREAYKITAKQERYKAVDAVKAKVALALFPEDAEPRFSKEKVAEAFHDLQAKVVRWNILDLGVRIDGRDLKTVRPILAEVGILPRAHGSALFTRGETQALVVATLGTGEDEQFVDSLEGTYKERFLLHYNFPPYSVGETGRMGSPGRREIGHGKLAWRAVRPMLPTAAEFPYTIRIVSEITESNGSSSMATVCGSSLALMDAGVPLKRPTAGIAMGLILEGERFAVLSDILGDEDHLGDMDFKVAGTEEGVTSLQMDIKVAGITEEIMKVALDQAKGGRLHILGEMSKALTGARAELGEFAPRIETLKIPTDKIREVIGTGGKVIREIVEKTGAKINIEDDGTVKVASSDGNSIKAAIAWIKSIANDPEVGQIYEGTVVKVVDFGAFVNFFGSKDGLVHISQLAKGRVAKSSDVVKEGEKVKVKLLGFDDRGKVRLSMRYVDQETGEDLEAKEKAEQQASVD.

Aspartate 487 and aspartate 493 together coordinate Mg(2+). The KH domain occupies proline 554–isoleucine 613. Residues glycine 623–arginine 691 form the S1 motif domain.

The protein belongs to the polyribonucleotide nucleotidyltransferase family. It depends on Mg(2+) as a cofactor.

It is found in the cytoplasm. It catalyses the reaction RNA(n+1) + phosphate = RNA(n) + a ribonucleoside 5'-diphosphate. In terms of biological role, involved in mRNA degradation. Catalyzes the phosphorolysis of single-stranded polyribonucleotides processively in the 3'- to 5'-direction. The protein is Polyribonucleotide nucleotidyltransferase of Methylocella silvestris (strain DSM 15510 / CIP 108128 / LMG 27833 / NCIMB 13906 / BL2).